The primary structure comprises 283 residues: Polyamine aminopropyltransferase (283 aa).

One can recognise a PABS domain in the interval 2–237 (ELWYTEEHTD…GHWLFGFASK (236 aa)). Q31 contacts S-methyl-5'-thioadenosine. Residues H62 and D86 each coordinate spermidine. Residues E106 and 137-138 (DG) each bind S-methyl-5'-thioadenosine. Residue D155 is the Proton acceptor of the active site. 155-158 (DSTD) contacts spermidine. Position 162 (P162) interacts with S-methyl-5'-thioadenosine.

This sequence belongs to the spermidine/spermine synthase family. In terms of assembly, homodimer or homotetramer.

It is found in the cytoplasm. The catalysed reaction is S-adenosyl 3-(methylsulfanyl)propylamine + putrescine = S-methyl-5'-thioadenosine + spermidine + H(+). It functions in the pathway amine and polyamine biosynthesis; spermidine biosynthesis; spermidine from putrescine: step 1/1. Catalyzes the irreversible transfer of a propylamine group from the amino donor S-adenosylmethioninamine (decarboxy-AdoMet) to putrescine (1,4-diaminobutane) to yield spermidine. The polypeptide is Polyamine aminopropyltransferase (Clostridium perfringens (strain 13 / Type A)).